The chain runs to 944 residues: Valine--tRNA ligase (944 aa).

The 'HIGH' region motif lies at 43–53; sequence PNVTGTLHMGH. The 'KMSKS' region motif lies at 550-554; that stretch reads KMSKS. Position 553 (Lys553) interacts with ATP. Residues 878 to 944 are a coiled coil; sequence LVDMDAERTR…TGLREQRAKL (67 aa).

Belongs to the class-I aminoacyl-tRNA synthetase family. ValS type 1 subfamily. In terms of assembly, monomer.

It localises to the cytoplasm. It catalyses the reaction tRNA(Val) + L-valine + ATP = L-valyl-tRNA(Val) + AMP + diphosphate. Functionally, catalyzes the attachment of valine to tRNA(Val). As ValRS can inadvertently accommodate and process structurally similar amino acids such as threonine, to avoid such errors, it has a 'posttransfer' editing activity that hydrolyzes mischarged Thr-tRNA(Val) in a tRNA-dependent manner. This chain is Valine--tRNA ligase, found in Xanthomonas campestris pv. campestris (strain B100).